The primary structure comprises 366 residues: DNA polymerase IV (366 aa).

The UmuC domain occupies 6 to 197; sequence IIHVDMDYFY…LKVSKLWGIG (192 aa). Positions 10 and 114 each coordinate Mg(2+). Glutamate 115 is a catalytic residue.

Belongs to the DNA polymerase type-Y family. As to quaternary structure, monomer. It depends on Mg(2+) as a cofactor.

The protein localises to the cytoplasm. The enzyme catalyses DNA(n) + a 2'-deoxyribonucleoside 5'-triphosphate = DNA(n+1) + diphosphate. Functionally, poorly processive, error-prone DNA polymerase involved in untargeted mutagenesis. Copies undamaged DNA at stalled replication forks, which arise in vivo from mismatched or misaligned primer ends. These misaligned primers can be extended by PolIV. Exhibits no 3'-5' exonuclease (proofreading) activity. May be involved in translesional synthesis. The sequence is that of DNA polymerase IV from Methanosarcina acetivorans (strain ATCC 35395 / DSM 2834 / JCM 12185 / C2A).